The chain runs to 193 residues: Molybdenum cofactor guanylyltransferase (193 aa).

Residues 8–10 (LAG), Lys-21, Asp-67, and Asp-98 contribute to the GTP site. Mg(2+) is bound at residue Asp-98.

Belongs to the MobA family. As to quaternary structure, monomer. The cofactor is Mg(2+).

The protein localises to the cytoplasm. It carries out the reaction Mo-molybdopterin + GTP + H(+) = Mo-molybdopterin guanine dinucleotide + diphosphate. Its function is as follows. Transfers a GMP moiety from GTP to Mo-molybdopterin (Mo-MPT) cofactor (Moco or molybdenum cofactor) to form Mo-molybdopterin guanine dinucleotide (Mo-MGD) cofactor. The chain is Molybdenum cofactor guanylyltransferase from Cereibacter sphaeroides (Rhodobacter sphaeroides).